The following is a 150-amino-acid chain: Ribosome maturation factor RimP (150 aa).

The protein belongs to the RimP family.

It is found in the cytoplasm. Required for maturation of 30S ribosomal subunits. This Escherichia coli O9:H4 (strain HS) protein is Ribosome maturation factor RimP.